A 196-amino-acid chain; its full sequence is Dual-action ribosomal maturation protein DarP (196 aa).

The protein belongs to the DarP family.

It localises to the cytoplasm. Its function is as follows. Member of a network of 50S ribosomal subunit biogenesis factors which assembles along the 30S-50S interface, preventing incorrect 23S rRNA structures from forming. Promotes peptidyl transferase center (PTC) maturation. The sequence is that of Dual-action ribosomal maturation protein DarP from Stenotrophomonas maltophilia (strain R551-3).